Here is a 399-residue protein sequence, read N- to C-terminus: Endo-1,4-beta-xylanase C (399 aa).

The N-terminal stretch at 1–20 (MFKFSASLAALAALVPFVAA) is a signal peptide. In terms of domain architecture, CBM1 spans 21-56 (QSPEWGQCGGIGWTGPTTCVAGTTCVESNPYYSQCL). One can recognise a GH10 domain in the interval 81 to 396 (SAKLHTLAKA…KPAFNGIAAG (316 aa)). The active-site Proton donor is the Glu212. Glu318 serves as the catalytic Nucleophile. An intrachain disulfide couples Cys346 to Cys352.

The protein belongs to the glycosyl hydrolase 10 (cellulase F) family.

It localises to the secreted. The enzyme catalyses Endohydrolysis of (1-&gt;4)-beta-D-xylosidic linkages in xylans.. The protein operates within glycan degradation; xylan degradation. Its function is as follows. Endo-1,4-beta-xylanase involved in the hydrolysis of xylan, a major structural heterogeneous polysaccharide found in plant biomass representing the second most abundant polysaccharide in the biosphere, after cellulose. The protein is Endo-1,4-beta-xylanase C (xynC) of Phanerodontia chrysosporium (White-rot fungus).